Here is a 189-residue protein sequence, read N- to C-terminus: MGDKIFHNLSGKTLVATPHVITKGIYHKSLIYMLSHTKEGAIGLIFNRLVNHIDLKSFFKIKNDKITTPVMVPIYLGGPVEHEKGFFLHSSDYNKNLLLDFHNDLAVSSNLEISEDIAFGKGPKHSLFIVGYTAWKPGQLEEELETNLWLVMDCNKEFIFADNPESKWHNALKHLGIDEIHFSSQIGNA.

This sequence belongs to the UPF0301 (AlgH) family.

The polypeptide is UPF0301 protein RAF_ORF0041 (Rickettsia africae (strain ESF-5)).